The following is a 168-amino-acid chain: ATP synthase subunit b (168 aa).

A helical transmembrane segment spans residues 10-30 (LYLGDMLFYLVSFLIMAALVW). The interval 61-80 (EAQKLAAKRQEELKGSRQEA) is disordered.

This sequence belongs to the ATPase B chain family. F-type ATPases have 2 components, F(1) - the catalytic core - and F(0) - the membrane proton channel. F(1) has five subunits: alpha(3), beta(3), gamma(1), delta(1), epsilon(1). F(0) has three main subunits: a(1), b(2) and c(10-14). The alpha and beta chains form an alternating ring which encloses part of the gamma chain. F(1) is attached to F(0) by a central stalk formed by the gamma and epsilon chains, while a peripheral stalk is formed by the delta and b chains.

Its subcellular location is the cell membrane. Functionally, f(1)F(0) ATP synthase produces ATP from ADP in the presence of a proton or sodium gradient. F-type ATPases consist of two structural domains, F(1) containing the extramembraneous catalytic core and F(0) containing the membrane proton channel, linked together by a central stalk and a peripheral stalk. During catalysis, ATP synthesis in the catalytic domain of F(1) is coupled via a rotary mechanism of the central stalk subunits to proton translocation. In terms of biological role, component of the F(0) channel, it forms part of the peripheral stalk, linking F(1) to F(0). The sequence is that of ATP synthase subunit b from Limosilactobacillus fermentum (strain NBRC 3956 / LMG 18251) (Lactobacillus fermentum).